The sequence spans 115 residues: uncharacterized protein (115 aa).

Helical transmembrane passes span 6 to 26 (ILIILVIILTTYFTRIWPFMV), 43 to 63 (ALSCSVIGMLVIYCFKDIHIL), and 84 to 104 (IFKVFVLSITLPTILYMVLVQ).

Belongs to the AzlD/HI_1737/HP1330 family.

Its subcellular location is the cell membrane. This is an uncharacterized protein from Helicobacter pylori (strain ATCC 700392 / 26695) (Campylobacter pylori).